The primary structure comprises 388 residues: 3-sulfinopropanoyl-CoA desulfinase (388 aa).

FAD is bound by residues 121 to 124 (ICIT), Ser130, and 153 to 156 (HWIT). 240-241 (YN) is a binding site for substrate. FAD is bound by residues Arg269, Gln336, 363-367 (GGTAQ), and Gln384.

It belongs to the acyl-CoA dehydrogenase family. As to quaternary structure, homotrimer or homotetramer. FAD serves as cofactor.

The enzyme catalyses 3-sulfinopropanoyl-CoA + H2O = propanoyl-CoA + sulfite + H(+). In terms of biological role, catalyzes the conversion 3-sulfinopropanoyl-CoA (3SP-CoA) to propanoyl-CoA by abstraction of sulfite. Does not show dehydrogenase activity. The protein is 3-sulfinopropanoyl-CoA desulfinase of Paraburkholderia xenovorans (strain LB400).